A 245-amino-acid chain; its full sequence is Carboxymethylenebutenolidase homolog (245 aa).

A2 is modified (N-acetylalanine). K36 is modified (N6-acetyllysine). Residues C132, D179, and H212 contribute to the active site. Phosphoserine is present on S223.

Belongs to the dienelactone hydrolase family. In terms of tissue distribution, widely expressed, with highest levels in liver, followed by kidney, small intestine and colon. Present in liver and intestine (at protein level).

The protein localises to the cytoplasm. It localises to the cytosol. Strongly inhibited by p-chloromercuribenzoate (PCMB). Partially inhibited by bis-p-nitrophenylphosphate (BNPP). Not inhibited by DFP, PMSF, eserine or EDTA. In terms of biological role, cysteine hydrolase. Can convert the prodrug olmesartan medoxomil into its pharmacologically active metabolite olmerstatan, an angiotensin receptor blocker, in liver and intestine. May also activate beta-lactam antibiotics faropenem medoxomil and lenampicillin. This Homo sapiens (Human) protein is Carboxymethylenebutenolidase homolog (CMBL).